The chain runs to 158 residues: NAD(P)H-quinone oxidoreductase subunit J, chloroplastic (158 aa).

This sequence belongs to the complex I 30 kDa subunit family. NDH is composed of at least 16 different subunits, 5 of which are encoded in the nucleus.

It is found in the plastid. The protein resides in the chloroplast thylakoid membrane. It carries out the reaction a plastoquinone + NADH + (n+1) H(+)(in) = a plastoquinol + NAD(+) + n H(+)(out). The enzyme catalyses a plastoquinone + NADPH + (n+1) H(+)(in) = a plastoquinol + NADP(+) + n H(+)(out). In terms of biological role, NDH shuttles electrons from NAD(P)H:plastoquinone, via FMN and iron-sulfur (Fe-S) centers, to quinones in the photosynthetic chain and possibly in a chloroplast respiratory chain. The immediate electron acceptor for the enzyme in this species is believed to be plastoquinone. Couples the redox reaction to proton translocation, and thus conserves the redox energy in a proton gradient. This Piper cenocladum (Ant piper) protein is NAD(P)H-quinone oxidoreductase subunit J, chloroplastic.